The following is a 456-amino-acid chain: Non-structural protein V (456 aa).

A disordered region spans residues 53 to 92 (SGESEQVEGGMSKDDGDVERRNLEDLSSTSPTDGTIGKRV). The segment covering 63–76 (MSKDDGDVERRNLE) has biased composition (basic and acidic residues). S257 is modified (phosphoserine; by host). Residues 265–324 (ISPEDEEPSSVGGKPNESIGRTIEGQSIRDNLQAKDNKSTDVPGAGPKDSAVKEEPPQKR) form a disordered region. Phosphoserine; by host is present on S350. H408, C427, C431, C443, C445, C448, C452, and C455 together coordinate Zn(2+).

It belongs to the paramyxoviruses V protein family. Interacts with host IFIH1/MDA5, DHX58/LGP2, STAT1 and STAT2. Interacts (via N-terminus) with host UBXN1 (via C-terminal UBX domain); this interaction inhibits interferon-alpha/beta (IFN-alpha/beta) production. Interacts with host RIGI regulatory protein (via CARDs domain) and host TRIM25 (via SPRY domain); these interactions prevent TRIM25-mediated ubiquitination of RIG-I and disrupts downstream RIG-I signaling.

The protein resides in the host cytoplasm. In terms of biological role, plays an essential role in the inhibition of host immune response. Prevents the establishment of cellular antiviral state by blocking interferon-alpha/beta (IFN-alpha/beta) production and signaling pathway. Interacts with host IFIH1/MDA5 and DHX58/LGP2 to inhibit the transduction pathway involved in the activation of IFN-beta promoter, thus protecting the virus against cell antiviral state. Blocks the type I interferon signaling pathway by interacting with host STAT1 and STAT2 and thereby inhibiting their phosphorylation and subsequent nuclear translocation. Efficiently blocks the type II interferon signaling pathway. Suppresses interferon induction by interacting with and stabilizing host UBXN1, a negative regulator of both RIG-I-like receptors (RLR) and NF-kappa-B pathways. Blocks the type I interferon signaling pathway by disrupting the RIG-I signaling pathway. This is Non-structural protein V (P/V/C) from Cynopterus brachyotis (Lesser short-nosed fruit bat).